Here is a 154-residue protein sequence, read N- to C-terminus: Lipoprotein signal peptidase (154 aa).

2 consecutive transmembrane segments (helical) span residues 55–75 (GHMW…IYIM) and 84–104 (LFSI…IDRV). Active-site residues include aspartate 111 and aspartate 129. Residues 124–144 (IFNVADASLSVGVVLMLVYVF) traverse the membrane as a helical segment.

This sequence belongs to the peptidase A8 family.

The protein resides in the cell membrane. The catalysed reaction is Release of signal peptides from bacterial membrane prolipoproteins. Hydrolyzes -Xaa-Yaa-Zaa-|-(S,diacylglyceryl)Cys-, in which Xaa is hydrophobic (preferably Leu), and Yaa (Ala or Ser) and Zaa (Gly or Ala) have small, neutral side chains.. The protein operates within protein modification; lipoprotein biosynthesis (signal peptide cleavage). Its function is as follows. This protein specifically catalyzes the removal of signal peptides from prolipoproteins. The sequence is that of Lipoprotein signal peptidase from Listeria welshimeri serovar 6b (strain ATCC 35897 / DSM 20650 / CCUG 15529 / CIP 8149 / NCTC 11857 / SLCC 5334 / V8).